The chain runs to 77 residues: Sec-independent protein translocase protein TatA (77 aa).

Residues 1–21 (MGGLSIWHWLIVLLIVALVFG) form a helical membrane-spanning segment. The interval 43–77 (MKESEAPADAQQLPRSGSVNVDAKDAARSSDSNKA) is disordered. The span at 64 to 77 (DAKDAARSSDSNKA) shows a compositional bias: basic and acidic residues.

The protein belongs to the TatA/E family. In terms of assembly, the Tat system comprises two distinct complexes: a TatABC complex, containing multiple copies of TatA, TatB and TatC subunits, and a separate TatA complex, containing only TatA subunits. Substrates initially bind to the TatABC complex, which probably triggers association of the separate TatA complex to form the active translocon.

Its subcellular location is the cell inner membrane. Functionally, part of the twin-arginine translocation (Tat) system that transports large folded proteins containing a characteristic twin-arginine motif in their signal peptide across membranes. TatA could form the protein-conducting channel of the Tat system. The sequence is that of Sec-independent protein translocase protein TatA from Burkholderia mallei (strain NCTC 10247).